A 159-amino-acid chain; its full sequence is 2-C-methyl-D-erythritol 2,4-cyclodiphosphate synthase (159 aa).

Positions 10 and 12 each coordinate a divalent metal cation. Residues 10 to 12 and 36 to 37 contribute to the 4-CDP-2-C-methyl-D-erythritol 2-phosphate site; these read DVH and HS. Residue histidine 44 coordinates a divalent metal cation. 4-CDP-2-C-methyl-D-erythritol 2-phosphate-binding positions include 58-60, 63-67, 102-108, 134-137, phenylalanine 141, and arginine 144; these read DIG, FPDTD, AQAPRMA, and TTSE.

It belongs to the IspF family. In terms of assembly, homotrimer. A divalent metal cation is required as a cofactor.

The enzyme catalyses 4-CDP-2-C-methyl-D-erythritol 2-phosphate = 2-C-methyl-D-erythritol 2,4-cyclic diphosphate + CMP. Its pathway is isoprenoid biosynthesis; isopentenyl diphosphate biosynthesis via DXP pathway; isopentenyl diphosphate from 1-deoxy-D-xylulose 5-phosphate: step 4/6. Its function is as follows. Involved in the biosynthesis of isopentenyl diphosphate (IPP) and dimethylallyl diphosphate (DMAPP), two major building blocks of isoprenoid compounds. Catalyzes the conversion of 4-diphosphocytidyl-2-C-methyl-D-erythritol 2-phosphate (CDP-ME2P) to 2-C-methyl-D-erythritol 2,4-cyclodiphosphate (ME-CPP) with a corresponding release of cytidine 5-monophosphate (CMP). The protein is 2-C-methyl-D-erythritol 2,4-cyclodiphosphate synthase of Cellvibrio japonicus (strain Ueda107) (Pseudomonas fluorescens subsp. cellulosa).